A 524-amino-acid polypeptide reads, in one-letter code: DEAD-box ATP-dependent RNA helicase CshA (524 aa).

The short motif at 1-29 (MKFNELNLSADLLAEIEKAGFVEASPIQE) is the Q motif element. One can recognise a Helicase ATP-binding domain in the interval 32–202 (IPLALEGKDV…VQFMKAPEHV (171 aa)). 45–52 (AQTGTGKT) contributes to the ATP binding site. Positions 150 to 153 (DEAD) match the DEAD box motif. A Helicase C-terminal domain is found at 213-373 (LVDQYYIRVK…GLKPASVEES (161 aa)). The segment at 440–524 (EKPLPFKPSG…GFVIRNKGDK (85 aa)) is disordered. The segment covering 463–498 (RRGDDRRERDRRGNGRRDEFKKGSRGNDRFDKEKRY) has biased composition (basic and acidic residues).

This sequence belongs to the DEAD box helicase family. CshA subfamily. In terms of assembly, oligomerizes, may be a member of the RNA degradosome.

Its subcellular location is the cytoplasm. The catalysed reaction is ATP + H2O = ADP + phosphate + H(+). DEAD-box RNA helicase possibly involved in RNA degradation. Unwinds dsRNA in both 5'- and 3'-directions, has RNA-dependent ATPase activity. This chain is DEAD-box ATP-dependent RNA helicase CshA, found in Streptococcus pneumoniae serotype 4 (strain ATCC BAA-334 / TIGR4).